Consider the following 231-residue polypeptide: Flagellar L-ring protein (231 aa).

A signal peptide spans 1–18 (MSRLLIVVSLSSAFALAG). The N-palmitoyl cysteine moiety is linked to residue Cys19. The S-diacylglycerol cysteine moiety is linked to residue Cys19.

It belongs to the FlgH family. As to quaternary structure, the basal body constitutes a major portion of the flagellar organelle and consists of four rings (L,P,S, and M) mounted on a central rod.

The protein localises to the cell outer membrane. It is found in the bacterial flagellum basal body. Functionally, assembles around the rod to form the L-ring and probably protects the motor/basal body from shearing forces during rotation. This Stutzerimonas stutzeri (strain A1501) (Pseudomonas stutzeri) protein is Flagellar L-ring protein.